A 427-amino-acid chain; its full sequence is Arginine biosynthesis bifunctional protein ArgJ (427 aa).

Substrate contacts are provided by Thr174, Lys200, Thr211, Glu291, Asn422, and Thr427. The Nucleophile role is filled by Thr211.

Belongs to the ArgJ family. As to quaternary structure, heterotetramer of two alpha and two beta chains.

The protein localises to the cytoplasm. It catalyses the reaction N(2)-acetyl-L-ornithine + L-glutamate = N-acetyl-L-glutamate + L-ornithine. The catalysed reaction is L-glutamate + acetyl-CoA = N-acetyl-L-glutamate + CoA + H(+). It functions in the pathway amino-acid biosynthesis; L-arginine biosynthesis; L-ornithine and N-acetyl-L-glutamate from L-glutamate and N(2)-acetyl-L-ornithine (cyclic): step 1/1. The protein operates within amino-acid biosynthesis; L-arginine biosynthesis; N(2)-acetyl-L-ornithine from L-glutamate: step 1/4. Its function is as follows. Catalyzes two activities which are involved in the cyclic version of arginine biosynthesis: the synthesis of N-acetylglutamate from glutamate and acetyl-CoA as the acetyl donor, and of ornithine by transacetylation between N(2)-acetylornithine and glutamate. This Prochlorococcus marinus (strain MIT 9313) protein is Arginine biosynthesis bifunctional protein ArgJ.